Here is an 805-residue protein sequence, read N- to C-terminus: MSYKHIEIEKKWQRYWEEHKTFKTTEDDDKKNYYALDMFPYPSGQGLHVGHPEGYTATDIMARMKRMQGYNVLHPMGWDAFGLPAEQYALNTGNSPREFTKKNVNNFRRQIKSLGLSYDWDREVNTTDPAYYKWTQWIFEQLYKKGLAYEAEVPVNWSPDLGTVVANEEVIDGKTERGGFPVIRKPMRQWVLKITAYADRLIDDLDDLDWPEAIKEQQRNWIGRSVGAAINFPVSGDENTKIEVFSTRPDTIFGVAALVLAPEHELVKQLTTPEHENEVEAYIEKISHKSDLERTDLAKDKTGVFTGSYVVNPVSGEKLPIWIADYVLNSYGTGAVMVVPAHDERDHEFAQKFDLPIVQVIEGGDVQKEAYTGDGVHINSDFLNGMDKEEAIDAINNWLEENGVGEKKVNYRLRDWLFSRQRYWGEPIPVIHWEDGETTLVPEDELPLYLPKATDIKPSGTGESPLANLDDWVNVVDENGRKGRRETNTMPQWAGSSWYFLRYIDPHNNHEIADYEKLKEWLPVNLYVGGAEHAVLHLLYARFWHKFLYDLGVVPTKEPFQKLVNQGMILGSNHEKMSKSKGNVVNPDDIVEQYGADTLRLYEMFMGPLDASIPWSEEGLGGAHKFINRVWNLLIDENDNLRDRVTTINNHDLDKIYNETVKKVTEDYEAMHFNTAISQLMVFVNNAYKADSLPLEYVEGLVKLLSPVVPHITEELWSKLGHVGSIAYAKWPTYDESKLVEDVVEIVVQINGKVRQHLQVSKDASREELQALALNDERIKQELADKEVKKVIAVPGKLVSIVVAK.

Residues 40–51 carry the 'HIGH' region motif; that stretch reads PYPSGQGLHVGH. The 'KMSKS' region signature appears at 576-580; the sequence is KMSKS. Residue K579 coordinates ATP.

The protein belongs to the class-I aminoacyl-tRNA synthetase family.

The protein localises to the cytoplasm. The enzyme catalyses tRNA(Leu) + L-leucine + ATP = L-leucyl-tRNA(Leu) + AMP + diphosphate. This Ligilactobacillus salivarius (strain UCC118) (Lactobacillus salivarius) protein is Leucine--tRNA ligase.